A 336-amino-acid polypeptide reads, in one-letter code: Glycerol-3-phosphate dehydrogenase [NAD(P)+] (336 aa).

Residues W16 and K109 each contribute to the NADPH site. Sn-glycerol 3-phosphate-binding residues include K109, G137, and S139. An NADPH-binding site is contributed by A141. Sn-glycerol 3-phosphate is bound by residues K192, D245, S255, R256, and N257. K192 functions as the Proton acceptor in the catalytic mechanism. R256 lines the NADPH pocket. Positions 280 and 282 each coordinate NADPH.

It belongs to the NAD-dependent glycerol-3-phosphate dehydrogenase family.

Its subcellular location is the cytoplasm. The catalysed reaction is sn-glycerol 3-phosphate + NAD(+) = dihydroxyacetone phosphate + NADH + H(+). The enzyme catalyses sn-glycerol 3-phosphate + NADP(+) = dihydroxyacetone phosphate + NADPH + H(+). It functions in the pathway membrane lipid metabolism; glycerophospholipid metabolism. In terms of biological role, catalyzes the reduction of the glycolytic intermediate dihydroxyacetone phosphate (DHAP) to sn-glycerol 3-phosphate (G3P), the key precursor for phospholipid synthesis. The protein is Glycerol-3-phosphate dehydrogenase [NAD(P)+] of Hyphomonas neptunium (strain ATCC 15444).